A 595-amino-acid chain; its full sequence is Inactive metallocarboxypeptidase ecm14 (595 aa).

Positions 1-22 are cleaved as a signal peptide; sequence MYRPDHVFVILCAVFFTGQVTA. Positions 23–178 are excised as a propeptide; sequence VPAGTGITHP…MIYESQYPSR (156 aa). Positions 206–527 constitute a Peptidase M14 domain; it reads NYQPFPVILQ…NSVLVLGHFL (322 aa). Residues H270 and E273 each coordinate Zn(2+). Residues 270 to 273, R328, and 345 to 346 each bind substrate; these read HARE and DR. Cysteines 339 and 362 form a disulfide. N386 carries an N-linked (GlcNAc...) asparagine glycan. Zn(2+) is bound at residue H402. 403 to 404 contacts substrate; it reads SY.

It belongs to the peptidase M14 family. The cofactor is Zn(2+).

The protein localises to the vacuole. Its subcellular location is the secreted. Inactive carboxypeptidase that may play a role in cell wall organization and biogenesis. In Talaromyces marneffei (strain ATCC 18224 / CBS 334.59 / QM 7333) (Penicillium marneffei), this protein is Inactive metallocarboxypeptidase ecm14 (ecm14).